The primary structure comprises 264 residues: Ferric siderophore reductase (264 aa).

The region spanning 9–127 (SPTRLTYISD…PGPLKMNRFD (119 aa)) is the FAD-binding FR-type domain. Residues R73, S74, T76, D90, V92, H96, A100, T101, K247, N249, T250, and A252 each contribute to the FAD site.

Belongs to the SIP oxidoreductase family. It depends on FAD as a cofactor.

Ferric-siderophore reductase involved in iron removal from the siderophores after their transport into the cell. Catalyzes the reduction of the ferric iron bound to the hydroxamate siderophores produced by Shewanella to ferrous iron. Can use a ferredoxin as electron donor. Despite the clear evidence for the interaction with NAD(P)H, no direct reduction of the enzyme by these compounds is observed, nor consumption of NAD(P)H, suggesting that NADH and NADPH are not the physiological electron donors. The protein is Ferric siderophore reductase of Shewanella frigidimarina (strain NCIMB 400).